Consider the following 390-residue polypeptide: 1-deoxy-D-xylulose 5-phosphate reductoisomerase (390 aa).

Positions 10, 11, 12, 13, 38, 40, and 123 each coordinate NADPH. Lys-124 lines the 1-deoxy-D-xylulose 5-phosphate pocket. Glu-125 contributes to the NADPH binding site. Residue Asp-149 participates in Mn(2+) binding. 1-deoxy-D-xylulose 5-phosphate is bound by residues Ser-150, Glu-151, Ser-175, and His-198. Glu-151 is a binding site for Mn(2+). Gly-204 contacts NADPH. 1-deoxy-D-xylulose 5-phosphate is bound by residues Ser-211, Asn-216, Lys-217, and Glu-220. Mn(2+) is bound at residue Glu-220.

Belongs to the DXR family. Requires Mg(2+) as cofactor. The cofactor is Mn(2+).

The enzyme catalyses 2-C-methyl-D-erythritol 4-phosphate + NADP(+) = 1-deoxy-D-xylulose 5-phosphate + NADPH + H(+). Its pathway is isoprenoid biosynthesis; isopentenyl diphosphate biosynthesis via DXP pathway; isopentenyl diphosphate from 1-deoxy-D-xylulose 5-phosphate: step 1/6. In terms of biological role, catalyzes the NADPH-dependent rearrangement and reduction of 1-deoxy-D-xylulose-5-phosphate (DXP) to 2-C-methyl-D-erythritol 4-phosphate (MEP). The sequence is that of 1-deoxy-D-xylulose 5-phosphate reductoisomerase from Paracoccus denitrificans (strain Pd 1222).